Here is a 72-residue protein sequence, read N- to C-terminus: Translation initiation factor IF-1 (72 aa).

In terms of domain architecture, S1-like spans 1–72 (MSKSDYIELE…TKGRITFRHK (72 aa)).

This sequence belongs to the IF-1 family. As to quaternary structure, component of the 30S ribosomal translation pre-initiation complex which assembles on the 30S ribosome in the order IF-2 and IF-3, IF-1 and N-formylmethionyl-tRNA(fMet); mRNA recruitment can occur at any time during PIC assembly.

The protein resides in the cytoplasm. In terms of biological role, one of the essential components for the initiation of protein synthesis. Stabilizes the binding of IF-2 and IF-3 on the 30S subunit to which N-formylmethionyl-tRNA(fMet) subsequently binds. Helps modulate mRNA selection, yielding the 30S pre-initiation complex (PIC). Upon addition of the 50S ribosomal subunit IF-1, IF-2 and IF-3 are released leaving the mature 70S translation initiation complex. This Vesicomyosocius okutanii subsp. Calyptogena okutanii (strain HA) protein is Translation initiation factor IF-1.